The sequence spans 217 residues: Neuron-specific vesicular protein calcyon (217 aa).

Residues 1–25 (MVKLGCSFSGKPGKDPGDQDGAAMD) are disordered. At 1–87 (MVKLGCSFSG…EEGRRLPTAR (87 aa)) the chain is on the extracellular side. N73 carries an N-linked (GlcNAc...) asparagine glycan. The chain crosses the membrane as a helical span at residues 88–108 (MIAFAMALLGCVLIMYKAIWY). The Cytoplasmic portion of the chain corresponds to 109–217 (DQFTCPDGFL…AGSAAPPPAQ (109 aa)). The tract at residues 162–217 (PAAWGDGYRAAKEERKGPTQAGAAAAATEPPGKPSAKAEKEAARKAAGSAAPPPAQ) is disordered.

Belongs to the NSG family. Interacts with CLTA. Post-translationally, glycosylated. As to expression, expressed in the pyramidal cells of the prefrontal cortex, in hypothalamus and in caudate nucleus. No expression in spleen. Up-regulated in the prefrontal cortex of schizophrenic patients with nearly twice the levels of non-schizophrenics.

The protein resides in the cytoplasmic vesicle membrane. It is found in the cell membrane. Functionally, interacts with clathrin light chain A and stimulates clathrin self-assembly and clathrin-mediated endocytosis. This is Neuron-specific vesicular protein calcyon (CALY) from Homo sapiens (Human).